A 358-amino-acid polypeptide reads, in one-letter code: Alanine racemase (358 aa).

K34 functions as the Proton acceptor; specific for D-alanine in the catalytic mechanism. K34 carries the post-translational modification N6-(pyridoxal phosphate)lysine. R129 is a substrate binding site. The active-site Proton acceptor; specific for L-alanine is Y254. M302 provides a ligand contact to substrate.

The protein belongs to the alanine racemase family. Requires pyridoxal 5'-phosphate as cofactor.

It carries out the reaction L-alanine = D-alanine. It participates in amino-acid biosynthesis; D-alanine biosynthesis; D-alanine from L-alanine: step 1/1. Functionally, catalyzes the interconversion of L-alanine and D-alanine. May also act on other amino acids. This is Alanine racemase (alr) from Vibrio parahaemolyticus serotype O3:K6 (strain RIMD 2210633).